Consider the following 110-residue polypeptide: Secreted Ly-6/uPAR-related protein 1 (110 aa).

Residues 1–22 (MTLRWAMWLLLLAAWSMGYGEA) form the signal peptide. In terms of domain architecture, UPAR/Ly6 spans 24 to 73 (RCYTCEQPTAINSCKNIAQCKMEDTACKTVLETVEAAFPFNHSPMVTRSC). 5 disulfide bridges follow: C25–C50, C28–C37, C43–C73, C77–C93, and C94–C99.

In terms of assembly, homodimer. Interacts with PLAU. Interacts with CHRNA7. In terms of tissue distribution, expressed in skin, eye, whole lung, trachea, esophagus and stomach. Widely expressed in various tissues including spleen and thymus but not pancreas. Expressed in macrophages, dendritic cells, T and B cells. Expressed in lung specifically in ciliated bronchial epithelial cells (at protein level). Expression is decreased in lungs of asthmatic model mice. Expressed in the cornea.

The protein resides in the secreted. Has an antitumor activity. Was found to be a marker of late differentiation of the skin. Implicated in maintaining the physiological and structural integrity of the keratinocyte layers of the skin. In vitro down-regulates keratinocyte proliferation; the function may involve the proposed role as modulator of nicotinic acetylcholine receptors (nAChRs) activity. In vitro inhibits alpha-7-dependent nAChR currents in an allosteric manner. In T cells may be involved in regulation of intracellular Ca(2+) signaling. Seems to have a immunomodulatory function in the cornea. The function may implicate a possible role as a scavenger receptor for PLAU thereby blocking PLAU-dependent functions of PLAUR such as in cell migration and proliferation. This chain is Secreted Ly-6/uPAR-related protein 1 (Slurp1), found in Mus musculus (Mouse).